The chain runs to 87 residues: DNA-directed RNA polymerase subunit omega (87 aa).

The protein belongs to the RNA polymerase subunit omega family. The RNAP catalytic core consists of 2 alpha, 1 beta, 1 beta' and 1 omega subunit. When a sigma factor is associated with the core the holoenzyme is formed, which can initiate transcription.

It carries out the reaction RNA(n) + a ribonucleoside 5'-triphosphate = RNA(n+1) + diphosphate. Its function is as follows. Promotes RNA polymerase assembly. Latches the N- and C-terminal regions of the beta' subunit thereby facilitating its interaction with the beta and alpha subunits. This is DNA-directed RNA polymerase subunit omega from Alcanivorax borkumensis (strain ATCC 700651 / DSM 11573 / NCIMB 13689 / SK2).